The sequence spans 302 residues: Putative S-adenosyl-L-methionine-dependent methyltransferase MAB_4586c (302 aa).

Residues Asp-122 and Asp-151 to Leu-152 each bind S-adenosyl-L-methionine.

Belongs to the UPF0677 family.

Functionally, exhibits S-adenosyl-L-methionine-dependent methyltransferase activity. In Mycobacteroides abscessus (strain ATCC 19977 / DSM 44196 / CCUG 20993 / CIP 104536 / JCM 13569 / NCTC 13031 / TMC 1543 / L948) (Mycobacterium abscessus), this protein is Putative S-adenosyl-L-methionine-dependent methyltransferase MAB_4586c.